The primary structure comprises 482 residues: Glutamyl-tRNA(Gln) amidotransferase subunit A (482 aa).

Active-site charge relay system residues include Lys-80 and Ser-159. Ser-183 acts as the Acyl-ester intermediate in catalysis.

The protein belongs to the amidase family. GatA subfamily. Heterotrimer of A, B and C subunits.

The enzyme catalyses L-glutamyl-tRNA(Gln) + L-glutamine + ATP + H2O = L-glutaminyl-tRNA(Gln) + L-glutamate + ADP + phosphate + H(+). In terms of biological role, allows the formation of correctly charged Gln-tRNA(Gln) through the transamidation of misacylated Glu-tRNA(Gln) in organisms which lack glutaminyl-tRNA synthetase. The reaction takes place in the presence of glutamine and ATP through an activated gamma-phospho-Glu-tRNA(Gln). This chain is Glutamyl-tRNA(Gln) amidotransferase subunit A, found in Neorickettsia sennetsu (strain ATCC VR-367 / Miyayama) (Ehrlichia sennetsu).